Reading from the N-terminus, the 239-residue chain is Purine nucleoside phosphorylase DeoD-type (239 aa).

His5 lines the a purine D-ribonucleoside pocket. Phosphate-binding positions include Gly21, Arg25, Arg44, and 88-91 (RVGS). Residues 180 to 182 (EME) and 204 to 205 (SD) contribute to the a purine D-ribonucleoside site. Asp205 acts as the Proton donor in catalysis.

It belongs to the PNP/UDP phosphorylase family. As to quaternary structure, homohexamer; trimer of homodimers.

The catalysed reaction is a purine D-ribonucleoside + phosphate = a purine nucleobase + alpha-D-ribose 1-phosphate. The enzyme catalyses a purine 2'-deoxy-D-ribonucleoside + phosphate = a purine nucleobase + 2-deoxy-alpha-D-ribose 1-phosphate. Functionally, catalyzes the reversible phosphorolytic breakdown of the N-glycosidic bond in the beta-(deoxy)ribonucleoside molecules, with the formation of the corresponding free purine bases and pentose-1-phosphate. This is Purine nucleoside phosphorylase DeoD-type from Cronobacter sakazakii (strain ATCC BAA-894) (Enterobacter sakazakii).